Reading from the N-terminus, the 190-residue chain is Crossover junction endodeoxyribonuclease RuvC (190 aa).

Active-site residues include Asp-7, Glu-67, and Asp-140. The Mg(2+) site is built by Asp-7, Glu-67, and Asp-140.

It belongs to the RuvC family. Homodimer which binds Holliday junction (HJ) DNA. The HJ becomes 2-fold symmetrical on binding to RuvC with unstacked arms; it has a different conformation from HJ DNA in complex with RuvA. In the full resolvosome a probable DNA-RuvA(4)-RuvB(12)-RuvC(2) complex forms which resolves the HJ. The cofactor is Mg(2+).

The protein resides in the cytoplasm. The catalysed reaction is Endonucleolytic cleavage at a junction such as a reciprocal single-stranded crossover between two homologous DNA duplexes (Holliday junction).. Its function is as follows. The RuvA-RuvB-RuvC complex processes Holliday junction (HJ) DNA during genetic recombination and DNA repair. Endonuclease that resolves HJ intermediates. Cleaves cruciform DNA by making single-stranded nicks across the HJ at symmetrical positions within the homologous arms, yielding a 5'-phosphate and a 3'-hydroxyl group; requires a central core of homology in the junction. The consensus cleavage sequence is 5'-(A/T)TT(C/G)-3'. Cleavage occurs on the 3'-side of the TT dinucleotide at the point of strand exchange. HJ branch migration catalyzed by RuvA-RuvB allows RuvC to scan DNA until it finds its consensus sequence, where it cleaves and resolves the cruciform DNA. This chain is Crossover junction endodeoxyribonuclease RuvC, found in Fusobacterium nucleatum subsp. nucleatum (strain ATCC 25586 / DSM 15643 / BCRC 10681 / CIP 101130 / JCM 8532 / KCTC 2640 / LMG 13131 / VPI 4355).